A 384-amino-acid polypeptide reads, in one-letter code: MAVTVSTNVSAMTAQRYLNKATNELNTSMERLSSGHKINSAKDDAAGLQISNRLTAQSRGLDVAMRNANDGISIAQTAEGAMNEATSVMQRMRDLAIQSSNGTNSPAERQAINEESMALVDELNRIAETTSFGGRRLLNGSFGEAAFQIGASSGEAMIMGLTSIRADDTRMGGVTFFSEVGKGKDWGVDPTKADLKITLPGMGEDEDGNVDDLEININAKAGDDIEELATYINGQSDMINASVSEDGKLQIFVAHPNVQGDISISGGLASELGLSDEPVRTSVQDIDMTTVQGSQNAISVLDSALKYVDSQRADLGAKQNRLSHSINNLANIQENVDASNSRIKDTDFAKETTQMTKAQILQQAGTSILAQAKQLPNSAMSLLQ.

Residues Ala317–Asp347 are a coiled coil.

Belongs to the bacterial flagellin family. In terms of assembly, heteromer of multiple flagellin subunits including FlaA, FlaB/D, FlaC, FlaE and FlaF. Homomer of FlaC is not able to form a functional filament.

Its subcellular location is the secreted. The protein resides in the bacterial flagellum. Functionally, flagellin is the subunit protein which polymerizes to form the filaments of bacterial flagella. FlaC is not essential for polar flagellar synthesis and swimming motility. Homomer of FlaC is not able to form a functional filament. The polypeptide is Polar flagellin C (flaC) (Vibrio parahaemolyticus serotype O3:K6 (strain RIMD 2210633)).